Reading from the N-terminus, the 296-residue chain is Homoserine kinase (296 aa).

85-95 (PLSRGLGSSAA) lines the ATP pocket.

Belongs to the GHMP kinase family. Homoserine kinase subfamily.

The protein localises to the cytoplasm. It carries out the reaction L-homoserine + ATP = O-phospho-L-homoserine + ADP + H(+). Its pathway is amino-acid biosynthesis; L-threonine biosynthesis; L-threonine from L-aspartate: step 4/5. Its function is as follows. Catalyzes the ATP-dependent phosphorylation of L-homoserine to L-homoserine phosphate. The sequence is that of Homoserine kinase from Clostridium acetobutylicum (strain ATCC 824 / DSM 792 / JCM 1419 / IAM 19013 / LMG 5710 / NBRC 13948 / NRRL B-527 / VKM B-1787 / 2291 / W).